A 284-amino-acid polypeptide reads, in one-letter code: Tropomyosin (284 aa).

Residues 1-284 adopt a coiled-coil conformation; sequence MDAIKKKMQA…DMTFTELIGN (284 aa).

Belongs to the tropomyosin family. In terms of assembly, homodimer.

In terms of biological role, tropomyosin, in association with the troponin complex, plays a central role in the calcium dependent regulation of muscle contraction. The chain is Tropomyosin from Blattella germanica (German cockroach).